Here is a 199-residue protein sequence, read N- to C-terminus: Putative ATP-dependent Clp protease proteolytic subunit-like (199 aa).

The protein belongs to the peptidase S14 family. Component of the chloroplastic Clp protease core complex.

It localises to the plastid. The protein localises to the cyanelle. In terms of biological role, has lost the two conserved residues (Ser and His) proposed to be part of the active site. Therefore it could be inactive. This Cyanophora paradoxa protein is Putative ATP-dependent Clp protease proteolytic subunit-like (clpP-B).